An 82-amino-acid chain; its full sequence is Small ribosomal subunit protein bS20 (82 aa).

The protein belongs to the bacterial ribosomal protein bS20 family.

In terms of biological role, binds directly to 16S ribosomal RNA. This Streptococcus pyogenes serotype M12 (strain MGAS2096) protein is Small ribosomal subunit protein bS20.